Reading from the N-terminus, the 155-residue chain is Chaperone protein IpgC (155 aa).

This sequence belongs to the LcrH/SycD chaperone family.

It localises to the cytoplasm. Its function is as follows. Assists the correct folding of nascent IpaB. Once it is bound to IpaB, it binds to IpaC and impedes their premature association that would lead to their degradation in the absence of IpcG. This is Chaperone protein IpgC (ipgC) from Shigella dysenteriae.